A 429-amino-acid polypeptide reads, in one-letter code: MKERIIQPVNSGLNGNITIPGDKSISHRAVMFGAIAEGKTTIKGFLPGADCLSTISCFKEMGVDIVQNGDEVTVVGKGLEGLQEPKAVLDVGNSGTTIRLMSGILANTPFFSCVQGDASIAKRPMKRVTNPLKQMGANIDGREEGTFTPLTIRGGDLKAIEYNSPVASAQVKSAILLAGLRAEGVTAVTEPHISRDHTERMLEAFGVKVTREGKTVKLAGGQKLTATDVQVPGDVSSAAFFLVAGAIIPNSKLVLENVGMNPTRTGIIDVLEKMGATFTVEPINEGASEPAANITIETSSLKGIEIGGDIIPRLIDEIPVIALAATQAEGITVIKDAHELKVKETNRIDTVVAELTKLGARIEATDDGMIIYGKSALKGNTVNSYGDHRIGMMLAIAGCIAEGKTIIEDAEAVGVSYPTFFEELQKLTK.

Residues K23, S24, and R28 each contribute to the 3-phosphoshikimate site. K23 is a binding site for phosphoenolpyruvate. Phosphoenolpyruvate is bound by residues G95 and R123. 4 residues coordinate 3-phosphoshikimate: S168, Q170, D316, and K343. A phosphoenolpyruvate-binding site is contributed by Q170. Residue D316 is the Proton acceptor of the active site. Phosphoenolpyruvate is bound by residues R347 and R389.

It belongs to the EPSP synthase family. Monomer.

The protein localises to the cytoplasm. It carries out the reaction 3-phosphoshikimate + phosphoenolpyruvate = 5-O-(1-carboxyvinyl)-3-phosphoshikimate + phosphate. It participates in metabolic intermediate biosynthesis; chorismate biosynthesis; chorismate from D-erythrose 4-phosphate and phosphoenolpyruvate: step 6/7. In terms of biological role, catalyzes the transfer of the enolpyruvyl moiety of phosphoenolpyruvate (PEP) to the 5-hydroxyl of shikimate-3-phosphate (S3P) to produce enolpyruvyl shikimate-3-phosphate and inorganic phosphate. This is 3-phosphoshikimate 1-carboxyvinyltransferase from Bacillus thuringiensis (strain Al Hakam).